The sequence spans 174 residues: Inactive protein RESTRICTED TEV MOVEMENT 1 (174 aa).

The Jacalin-type lectin domain maps to 1–152; the sequence is MKIGPVGKHD…LQYIGVYLRP (152 aa).

Belongs to the jacalin lectin family. Self-interacts. Interacts with RTM3.

Its subcellular location is the cytoplasm. In terms of biological role, unable to mediate restriction of long-distance movement of the pathogenic tobacco etch virus (TEV) without causing a hypersensitive response or inducing systemic acquired resistance. The protein is Inactive protein RESTRICTED TEV MOVEMENT 1 (RTM1) of Arabidopsis thaliana (Mouse-ear cress).